A 169-amino-acid polypeptide reads, in one-letter code: ATP synthase subunit b (169 aa).

Residues 13-33 (LFLFQLINFLIIVFILKKFLF) form a helical membrane-spanning segment.

The protein belongs to the ATPase B chain family. In terms of assembly, F-type ATPases have 2 components, F(1) - the catalytic core - and F(0) - the membrane proton channel. F(1) has five subunits: alpha(3), beta(3), gamma(1), delta(1), epsilon(1). F(0) has three main subunits: a(1), b(2) and c(10-14). The alpha and beta chains form an alternating ring which encloses part of the gamma chain. F(1) is attached to F(0) by a central stalk formed by the gamma and epsilon chains, while a peripheral stalk is formed by the delta and b chains.

The protein resides in the cell inner membrane. In terms of biological role, f(1)F(0) ATP synthase produces ATP from ADP in the presence of a proton or sodium gradient. F-type ATPases consist of two structural domains, F(1) containing the extramembraneous catalytic core and F(0) containing the membrane proton channel, linked together by a central stalk and a peripheral stalk. During catalysis, ATP synthesis in the catalytic domain of F(1) is coupled via a rotary mechanism of the central stalk subunits to proton translocation. Component of the F(0) channel, it forms part of the peripheral stalk, linking F(1) to F(0). This chain is ATP synthase subunit b, found in Endomicrobium trichonymphae.